Consider the following 100-residue polypeptide: Small ribosomal subunit protein uS14c (100 aa).

This sequence belongs to the universal ribosomal protein uS14 family. In terms of assembly, part of the 30S ribosomal subunit.

Its subcellular location is the plastid. It localises to the chloroplast. In terms of biological role, binds 16S rRNA, required for the assembly of 30S particles. The protein is Small ribosomal subunit protein uS14c of Huperzia lucidula (Shining clubmoss).